Reading from the N-terminus, the 534-residue chain is Phenylalanine N-monooxygenase CYP79D16 (534 aa).

The first 21 residues, 1–21 (MEANVGFLTLCLAITLVRFLM), serve as a signal peptide directing secretion. Cys-472 is a binding site for heme. Asn-500 carries N-linked (GlcNAc...) asparagine glycosylation.

The protein belongs to the cytochrome P450 family. It depends on heme as a cofactor. As to expression, expressed in seedlings.

It catalyses the reaction L-phenylalanine + 2 reduced [NADPH--hemoprotein reductase] + 2 O2 = (E)-phenylacetaldehyde oxime + 2 oxidized [NADPH--hemoprotein reductase] + CO2 + 3 H2O + 2 H(+). In terms of biological role, involved in L-phenylalanine-derived cyanogenic glycoside biosynthesis, including prunasin and amygdalin defensive agents. Catalyzes the conversion of L-phenylalanine (Phe) into phenylacetaldoxime (PAOx). Cannot use tyrosine (Tyr), tryptophan (Trp) and valine (Val) as substrates. This is Phenylalanine N-monooxygenase CYP79D16 from Prunus mume (Japanese apricot).